Reading from the N-terminus, the 311-residue chain is Homoserine kinase (311 aa).

Position 88–98 (88–98 (PEGLGLGSSGA)) interacts with ATP.

This sequence belongs to the GHMP kinase family. Homoserine kinase subfamily.

It localises to the cytoplasm. It catalyses the reaction L-homoserine + ATP = O-phospho-L-homoserine + ADP + H(+). Its pathway is amino-acid biosynthesis; L-threonine biosynthesis; L-threonine from L-aspartate: step 4/5. Its function is as follows. Catalyzes the ATP-dependent phosphorylation of L-homoserine to L-homoserine phosphate. In Saccharolobus solfataricus (strain ATCC 35092 / DSM 1617 / JCM 11322 / P2) (Sulfolobus solfataricus), this protein is Homoserine kinase.